A 183-amino-acid polypeptide reads, in one-letter code: Large ribosomal subunit protein bL32m (183 aa).

4 residues coordinate Zn(2+): Cys-99, Cys-102, Cys-112, and Cys-115.

Belongs to the bacterial ribosomal protein bL32 family. In terms of assembly, component of the mitochondrial large ribosomal subunit (mt-LSU).

It localises to the mitochondrion. In terms of biological role, component of the mitochondrial large ribosomal subunit (mt-LSU). The mitochondrial ribosome (mitoribosome) is a large ribonucleoprotein complex responsible for the synthesis of proteins inside mitochondria. The chain is Large ribosomal subunit protein bL32m (mrpl-32) from Caenorhabditis elegans.